A 47-amino-acid chain; its full sequence is Large ribosomal subunit protein bL33C (47 aa).

The protein belongs to the bacterial ribosomal protein bL33 family.

In Staphylococcus epidermidis (strain ATCC 35984 / DSM 28319 / BCRC 17069 / CCUG 31568 / BM 3577 / RP62A), this protein is Large ribosomal subunit protein bL33C.